We begin with the raw amino-acid sequence, 759 residues long: Multifunctional tryptophan biosynthesis protein (759 aa).

Positions 27–223 (PIVMIDNYDS…LNLTAGTWEE (197 aa)) constitute a Glutamine amidotransferase type-1 domain. 80–82 (GPG) is an L-glutamine binding site. Cys108 serves as the catalytic Nucleophile; for GATase activity. Residues Gln112 and 158–159 (SL) each bind L-glutamine. Catalysis depends on for GATase activity residues His197 and Glu199. The interval 257–519 (ILEKIHAQRL…DPAAFARELL (263 aa)) is indole-3-glycerol phosphate synthase. An N-(5'-phosphoribosyl)anthranilate isomerase region spans residues 536–759 (LVKVCGTRSL…KAFINAVKEL (224 aa)).

It carries out the reaction N-(5-phospho-beta-D-ribosyl)anthranilate = 1-(2-carboxyphenylamino)-1-deoxy-D-ribulose 5-phosphate. It catalyses the reaction 1-(2-carboxyphenylamino)-1-deoxy-D-ribulose 5-phosphate + H(+) = (1S,2R)-1-C-(indol-3-yl)glycerol 3-phosphate + CO2 + H2O. The catalysed reaction is chorismate + L-glutamine = anthranilate + pyruvate + L-glutamate + H(+). The protein operates within amino-acid biosynthesis; L-tryptophan biosynthesis; L-tryptophan from chorismate: step 1/5. It functions in the pathway amino-acid biosynthesis; L-tryptophan biosynthesis; L-tryptophan from chorismate: step 3/5. It participates in amino-acid biosynthesis; L-tryptophan biosynthesis; L-tryptophan from chorismate: step 4/5. In terms of biological role, trifunctional enzyme bearing the Gln amidotransferase (GATase) domain of anthranilate synthase, indole-glycerolphosphate synthase, and phosphoribosylanthranilate isomerase activities. This chain is Multifunctional tryptophan biosynthesis protein (trp1), found in Schizosaccharomyces pombe (strain 972 / ATCC 24843) (Fission yeast).